A 268-amino-acid polypeptide reads, in one-letter code: MVNPQKINHFGKLEMAFEPRRGYTRLVHVYQQPPLKASRELYEGSDPTATVFLMESSGGMVAGDRNEINVKLASGSRVRLKQQSALKIYPSHTGDHCTQAITVEMADEARLEWLPEVTIPFERAKFQADTTIRMKESSTLIWGEIVAPGREMRGEVFDYQAYQSKYKVYVEEQLIAFDSIHFKPQEMNFAALGLLEKALYIGSLWIVSPLVKNLNMRDLQDLIQQEQSLQASVTKLTDQAIHCRWLAKEQRTLHKEINRMFEQMTALL.

It belongs to the UreD family. As to quaternary structure, ureD, UreF and UreG form a complex that acts as a GTP-hydrolysis-dependent molecular chaperone, activating the urease apoprotein by helping to assemble the nickel containing metallocenter of UreC. The UreE protein probably delivers the nickel.

The protein localises to the cytoplasm. In terms of biological role, required for maturation of urease via the functional incorporation of the urease nickel metallocenter. In Lysinibacillus sphaericus (strain C3-41), this protein is Urease accessory protein UreD.